Here is a 367-residue protein sequence, read N- to C-terminus: Riboflavin biosynthesis protein VVA0006 (367 aa).

215–219 (RLHSE) contributes to the GTP binding site. The Zn(2+) site is built by Cys220, Cys231, and Cys233. Residues Gln236, 258 to 260 (EGR), and Thr280 each bind GTP. Asp292 acts as the Proton acceptor in catalysis. Arg294 functions as the Nucleophile in the catalytic mechanism. Residues Thr315 and Lys320 each coordinate GTP.

In the N-terminal section; belongs to the YbiA family. This sequence in the C-terminal section; belongs to the GTP cyclohydrolase II family. The cofactor is Zn(2+).

It catalyses the reaction 2,5-diamino-6-hydroxy-4-(5-phosphoribosylamino)-pyrimidine + H2O = 2,5,6-triamino-4-hydroxypyrimidine + D-ribose 5-phosphate. The catalysed reaction is 5-amino-6-(5-phospho-D-ribosylamino)uracil + H2O = 5,6-diaminouracil + D-ribose 5-phosphate. It carries out the reaction GTP + 4 H2O = 2,5-diamino-6-hydroxy-4-(5-phosphoribosylamino)-pyrimidine + formate + 2 phosphate + 3 H(+). The protein operates within cofactor biosynthesis; riboflavin biosynthesis; 5-amino-6-(D-ribitylamino)uracil from GTP: step 1/4. Functionally, catalyzes the hydrolysis of the N-glycosidic bond in the first two intermediates of riboflavin biosynthesis, which are highly reactive metabolites, yielding relatively innocuous products. Thus, can divert a surplus of harmful intermediates into relatively harmless products and pre-empt the damage these intermediates would otherwise do. Has no activity against GTP, nucleoside monophosphates or ADP-ribose. Catalyzes the conversion of GTP to 2,5-diamino-6-ribosylamino-4(3H)-pyrimidinone 5'-phosphate (DARP), formate and pyrophosphate. The polypeptide is Riboflavin biosynthesis protein VVA0006 (Vibrio vulnificus (strain YJ016)).